Here is a 187-residue protein sequence, read N- to C-terminus: uncharacterized protein (187 aa).

Over residues 139 to 168 (ESKDRKALKNAARKAEKNAHEESSYFRVDD) the composition is skewed to basic and acidic residues. The segment at 139–172 (ESKDRKALKNAARKAEKNAHEESSYFRVDDPEPE) is disordered.

This is an uncharacterized protein from Caenorhabditis elegans.